Reading from the N-terminus, the 338-residue chain is Protein FosB (338 aa).

2 disordered regions span residues 1–54 (MFQA…PGSF) and 80–162 (AQSQ…RVRR). The segment covering 13-31 (SRCSSSPSAESQYLSSVDS) has biased composition (polar residues). Position 27 is a phosphoserine (Ser-27). Residues 113–124 (SSGGASGSGGPS) are compositionally biased toward gly residues. Low complexity predominate over residues 125–137 (TSGTTSGPGPARP). Residues 155–218 (EEKRRVRRER…ERLEFVLVAH (64 aa)) form the bZIP domain. The basic motif stretch occupies residues 157–182 (KRRVRRERNKLAAAKCRNRRRELTDR). The segment at 183–211 (LQAETDQLEEEKAELESEIAELQKEKERL) is leucine-zipper. Disordered stretches follow at residues 222–271 (CKIP…TSQD) and 315–338 (AGTQ…LLAL). Pro residues predominate over residues 256 to 265 (LPPPPAPPLP). Residues 318–338 (QRPSGSDQPTDPLNSPSLLAL) are compositionally biased toward polar residues.

It belongs to the bZIP family. Fos subfamily. As to quaternary structure, heterodimer; binds to DNA as heterodimer. Component of an AP-1 transcription factor complex; composed of FOS-JUN heterodimers. As part of the AP-1 transcription factor complex, forms heterodimers with JUN, JUNB or JUND, thereby binding to the AP-1 consensus sequence and stimulating transcription. Interacts with the BAF multiprotein chromatin-remodeling complex subunits SMARCB1 and SMARCD1. Interacts with ARID1A and JUN. Phosphorylated.

It is found in the nucleus. Functionally, heterodimerizes with proteins of the JUN family to form an AP-1 transcription factor complex, thereby enhancing their DNA binding activity to an AP-1 consensus sequence 5'-TGA[GC]TCA-3' and enhancing their transcriptional activity. Exhibits transactivation activity in vitro. As part of the AP-1 complex, facilitates enhancer selection together with cell-type-specific transcription factors by collaboratively binding to nucleosomal enhancers and recruiting the SWI/SNF (BAF) chromatin remodeling complex to establish accessible chromatin. Together with JUN, plays a role in activation-induced cell death of T cells by binding to the AP-1 promoter site of FASLG/CD95L, and inducing its transcription in response to activation of the TCR/CD3 signaling pathway. Involved in the display of nurturing behavior towards newborns. May play a role in neurogenesis in the hippocampus and in learning and memory-related tasks by regulating the expression of various genes involved in neurogenesis, depression and epilepsy. Implicated in behavioral responses related to morphine reward and spatial memory. This Canis lupus familiaris (Dog) protein is Protein FosB (FOSB).